The sequence spans 202 residues: Protein GrpE (202 aa).

Basic and acidic residues predominate over residues 21–37; the sequence is EELKNEEVKEETHEHEH. The tract at residues 21–52 is disordered; it reads EELKNEEVKEETHEHEHKHGGHTCCGKHGHKH. Residues 38–51 show a composition bias toward basic residues; sequence KHGGHTCCGKHGHK.

The protein belongs to the GrpE family. In terms of assembly, homodimer.

It localises to the cytoplasm. In terms of biological role, participates actively in the response to hyperosmotic and heat shock by preventing the aggregation of stress-denatured proteins, in association with DnaK and GrpE. It is the nucleotide exchange factor for DnaK and may function as a thermosensor. Unfolded proteins bind initially to DnaJ; upon interaction with the DnaJ-bound protein, DnaK hydrolyzes its bound ATP, resulting in the formation of a stable complex. GrpE releases ADP from DnaK; ATP binding to DnaK triggers the release of the substrate protein, thus completing the reaction cycle. Several rounds of ATP-dependent interactions between DnaJ, DnaK and GrpE are required for fully efficient folding. This chain is Protein GrpE, found in Fusobacterium nucleatum subsp. polymorphum (Fusobacterium polymorphum).